A 234-amino-acid polypeptide reads, in one-letter code: Peptidyl-tRNA hydrolase (234 aa).

Tyrosine 14 provides a ligand contact to tRNA. Histidine 19 functions as the Proton acceptor in the catalytic mechanism. TRNA is bound by residues phenylalanine 64, asparagine 66, and asparagine 112. Residues 187–234 (TGTKADEEKPKPAKSHIHQARNGVQPKKLPETGPMAEMLKKMFGPKKD) form a disordered region.

Belongs to the PTH family. As to quaternary structure, monomer.

Its subcellular location is the cytoplasm. The enzyme catalyses an N-acyl-L-alpha-aminoacyl-tRNA + H2O = an N-acyl-L-amino acid + a tRNA + H(+). Its function is as follows. Hydrolyzes ribosome-free peptidyl-tRNAs (with 1 or more amino acids incorporated), which drop off the ribosome during protein synthesis, or as a result of ribosome stalling. Catalyzes the release of premature peptidyl moieties from peptidyl-tRNA molecules trapped in stalled 50S ribosomal subunits, and thus maintains levels of free tRNAs and 50S ribosomes. The sequence is that of Peptidyl-tRNA hydrolase from Allorhizobium ampelinum (strain ATCC BAA-846 / DSM 112012 / S4) (Agrobacterium vitis (strain S4)).